The following is a 263-amino-acid chain: Coiled-coil domain-containing protein 172 (263 aa).

Positions 13 to 191 (TEHQAEESRR…LKVLKDEETE (179 aa)) form a coiled coil.

Belongs to the CCDC172 family. As to quaternary structure, may interact with TEKT2. Detected in spermatozoa (at protein level). Predominantly expressed in testis and in spermatozoa from the caput and corpus epididymis.

Its subcellular location is the cytoplasm. The protein localises to the cell projection. The protein resides in the cilium. This Rattus norvegicus (Rat) protein is Coiled-coil domain-containing protein 172 (Ccdc172).